Reading from the N-terminus, the 241-residue chain is Small ribosomal subunit protein uS3 (241 aa).

One can recognise a KH type-2 domain in the interval 39–109; it reads VRNYVNKNLS…PIRINVVEVA (71 aa). The tract at residues 213-241 is disordered; sequence ADEQPTNREPQQRRRQQQRRRQQFEDRSE.

Belongs to the universal ribosomal protein uS3 family. As to quaternary structure, part of the 30S ribosomal subunit. Forms a tight complex with proteins S10 and S14.

Its function is as follows. Binds the lower part of the 30S subunit head. Binds mRNA in the 70S ribosome, positioning it for translation. The polypeptide is Small ribosomal subunit protein uS3 (Acaryochloris marina (strain MBIC 11017)).